The chain runs to 302 residues: MDDYLKIEKIGEGTYGVVYKGRNKTTGQVVAMKKIRLESEEEGVPSTAVREISLLKELQHPNVVRLLDVLMQESKLYLVFEFLSMDLKKYLDSIPSGQFMDPMLVKSYLYQILEGILFCHCRRVLHRDLKPQNLLIDNKGVIKLADFGLARAFGVPVRVYTHEVVTLWYRAPEVLLGASRYSTPVDVWSIGTIFAELATKKPLFHGDSEIDQLFRIFRTLGTPNNEVWPDVESLPDYKNTFPKWKSGNLASTVKNLDKNGIDLLTKMLIYDPPKRISARQAMTHPYFDDLDKSTLPASNLKI.

One can recognise a Protein kinase domain in the interval 4 to 287 (YLKIEKIGEG…ARQAMTHPYF (284 aa)). Residues 10–18 (IGEGTYGVV) and K33 contribute to the ATP site. Residue T14 is modified to Phosphothreonine. Y15 is modified (phosphotyrosine; by wee1 and wee2). The Proton acceptor role is filled by D128. Position 161 is a phosphothreonine; by cak (T161).

The protein belongs to the protein kinase superfamily. CMGC Ser/Thr protein kinase family. CDC2/CDKX subfamily. In terms of assembly, forms a stable but non-covalent complex with cyclin B in mature oocytes. Phosphorylation at Tyr-15 by wee1 and wee2 inhibits the protein kinase activity and acts negative regulator of entry into mitosis (G2 to M transition).

It localises to the nucleus. The protein resides in the cytoplasm. Its subcellular location is the cytoskeleton. It is found in the microtubule organizing center. The protein localises to the centrosome. The enzyme catalyses L-seryl-[protein] + ATP = O-phospho-L-seryl-[protein] + ADP + H(+). The catalysed reaction is L-threonyl-[protein] + ATP = O-phospho-L-threonyl-[protein] + ADP + H(+). It carries out the reaction [DNA-directed RNA polymerase] + ATP = phospho-[DNA-directed RNA polymerase] + ADP + H(+). Its activity is regulated as follows. Phosphorylation at Thr-14 or Tyr-15 inactivates the enzyme, while phosphorylation at Thr-161 activates it. Plays a key role in the control of the eukaryotic cell cycle by modulating the centrosome cycle as well as mitotic onset; promotes G2-M transition via association with multiple interphase cyclins. During G2 and early mitosis, CDC25A/B/C-mediated dephosphorylation activates CDK1/cyclin complexes which phosphorylate several substrates that trigger at least centrosome separation, Golgi dynamics, nuclear envelope breakdown and chromosome condensation. Once chromosomes are condensed and aligned at the metaphase plate, CDK1 activity is switched off by WEE1- and PKMYT1-mediated phosphorylation to allow sister chromatid separation, chromosome decondensation, reformation of the nuclear envelope and cytokinesis. Catalyzes lamin (LMNA, LMNB1 and LMNB2) phosphorylation at the onset of mitosis, promoting nuclear envelope breakdown. The polypeptide is Cyclin-dependent kinase 1 (cdk1) (Carassius auratus (Goldfish)).